The following is a 428-amino-acid chain: Gamma-glutamyl phosphate reductase (428 aa).

Belongs to the gamma-glutamyl phosphate reductase family.

The protein resides in the cytoplasm. It catalyses the reaction L-glutamate 5-semialdehyde + phosphate + NADP(+) = L-glutamyl 5-phosphate + NADPH + H(+). Its pathway is amino-acid biosynthesis; L-proline biosynthesis; L-glutamate 5-semialdehyde from L-glutamate: step 2/2. In terms of biological role, catalyzes the NADPH-dependent reduction of L-glutamate 5-phosphate into L-glutamate 5-semialdehyde and phosphate. The product spontaneously undergoes cyclization to form 1-pyrroline-5-carboxylate. The polypeptide is Gamma-glutamyl phosphate reductase (Anaeromyxobacter sp. (strain Fw109-5)).